A 57-amino-acid chain; its full sequence is UPF0391 membrane protein RPB_2510 (57 aa).

2 consecutive transmembrane segments (helical) span residues 6-26 (WALI…TGIS) and 35-55 (ILFY…FTIF).

It belongs to the UPF0391 family.

It is found in the cell membrane. This Rhodopseudomonas palustris (strain HaA2) protein is UPF0391 membrane protein RPB_2510.